A 467-amino-acid chain; its full sequence is MKNFMDEKFMLSTKVAEDLYNDFAKDMPIIDYHCHISPQEICENKSFKNITEVWLYGDHYKWRLMRSSGVDEKYITGDSSDYEKFLAYVKAIETAIGNPLYHWSHLELQRYFGVYEVISEKNAPVIWEKANKVLNDGLTVREIIKKSNVKAICTTDDPIDSLEYHLKLKEDTSFNVKVLPAFRPDKALGINKDGYTDWVSKLAKVSKKNINSYDMFLEALNDRIEFFHSVGGRVSDHALDYVPYLEASKEEVNTIFAKALKGEKVSFEEETKFRTFTMKFLGKKYASLGWAMELHMNAKRDNNTRMYNKLGPDTGFDSVNDNGVAGPLSRFLDSLEKEGSLPKTIIYSLNPNDNFVIGTLLGCFQGTEAFGKIQFGAAWWFNDHRDGMVEQMETLANLGAFSTFIGMLTDSRSFLSYTRHEYFRRILCDLIGKWVENGEVPNDMELLGRITKNICFNNANNYFEMGL.

This sequence belongs to the metallo-dependent hydrolases superfamily. Uronate isomerase family.

The catalysed reaction is D-glucuronate = D-fructuronate. It catalyses the reaction aldehydo-D-galacturonate = keto-D-tagaturonate. The protein operates within carbohydrate metabolism; pentose and glucuronate interconversion. This chain is Uronate isomerase, found in Clostridium acetobutylicum (strain ATCC 824 / DSM 792 / JCM 1419 / IAM 19013 / LMG 5710 / NBRC 13948 / NRRL B-527 / VKM B-1787 / 2291 / W).